A 163-amino-acid polypeptide reads, in one-letter code: MSQQEPDDSRNCIVAVTLDEESIGRSGPDIEHERAIAIYDLVEKNLFAPQGGGEGPYTLHIGITGNRLMFDIRREDGSPVMVHLLSLTPFRRIVKDYFMICDSYYQAIRTATPDKIEAIDMGRRGIHDEGSRTLQERLAGKVRIDFETARRLFTLISVLHWKG.

The protein belongs to the UPF0262 family.

This Rhodopseudomonas palustris (strain BisB18) protein is UPF0262 protein RPC_4416.